The following is a 177-amino-acid chain: ATP synthase subunit delta (177 aa).

This sequence belongs to the ATPase delta chain family. F-type ATPases have 2 components, F(1) - the catalytic core - and F(0) - the membrane proton channel. F(1) has five subunits: alpha(3), beta(3), gamma(1), delta(1), epsilon(1). F(0) has three main subunits: a(1), b(2) and c(10-14). The alpha and beta chains form an alternating ring which encloses part of the gamma chain. F(1) is attached to F(0) by a central stalk formed by the gamma and epsilon chains, while a peripheral stalk is formed by the delta and b chains.

It is found in the cell inner membrane. In terms of biological role, f(1)F(0) ATP synthase produces ATP from ADP in the presence of a proton or sodium gradient. F-type ATPases consist of two structural domains, F(1) containing the extramembraneous catalytic core and F(0) containing the membrane proton channel, linked together by a central stalk and a peripheral stalk. During catalysis, ATP synthesis in the catalytic domain of F(1) is coupled via a rotary mechanism of the central stalk subunits to proton translocation. Functionally, this protein is part of the stalk that links CF(0) to CF(1). It either transmits conformational changes from CF(0) to CF(1) or is implicated in proton conduction. The polypeptide is ATP synthase subunit delta (Enterobacter sp. (strain 638)).